Consider the following 301-residue polypeptide: Putative hydro-lyase C5H10.01 (301 aa).

It belongs to the D-glutamate cyclase family.

In Schizosaccharomyces pombe (strain 972 / ATCC 24843) (Fission yeast), this protein is Putative hydro-lyase C5H10.01.